The primary structure comprises 144 residues: Alpha-crystallin (144 aa).

The region spanning 33 to 143 (PTFDTRLMRL…TEKHIQIRST (111 aa)) is the sHSP domain.

Belongs to the small heat shock protein (HSP20) family.

It is found in the secreted. The protein localises to the cell wall. The protein resides in the cytoplasm. Its function is as follows. Acts as a chaperone. The protein is Alpha-crystallin (hspX) of Mycobacterium bovis (strain ATCC BAA-935 / AF2122/97).